Here is a 321-residue protein sequence, read N- to C-terminus: Glucokinase (321 aa).

Residue 8 to 13 coordinates ATP; the sequence is GDVGGT.

This sequence belongs to the bacterial glucokinase family.

Its subcellular location is the cytoplasm. The enzyme catalyses D-glucose + ATP = D-glucose 6-phosphate + ADP + H(+). This chain is Glucokinase, found in Salmonella choleraesuis (strain SC-B67).